An 82-amino-acid chain; its full sequence is RNA-binding protein Hfq (82 aa).

A Sm domain is found at 9 to 68; that stretch reads DPYLNTLRKERVPVSIYLVNGIKLQGQIESFDQFVILLKNTVSQMVYKHAISTVVPSRPV.

This sequence belongs to the Hfq family. In terms of assembly, homohexamer.

In terms of biological role, RNA chaperone that binds small regulatory RNA (sRNAs) and mRNAs to facilitate mRNA translational regulation in response to envelope stress, environmental stress and changes in metabolite concentrations. Also binds with high specificity to tRNAs. The sequence is that of RNA-binding protein Hfq from Pseudomonas aeruginosa (strain LESB58).